We begin with the raw amino-acid sequence, 837 residues long: Periplasmic nitrate reductase (837 aa).

The tat-type signal signal peptide spans 1 to 32 (MTSPKLDRRQMLKLEAAAIAAAAAGLPVPALA). The region spanning 44–100 (LKWDKAACRFCGTGCSVMVATKENRVVATHGDIKAEVNRGLNCVKGYFLSKIMYGHD) is the 4Fe-4S Mo/W bis-MGD-type domain. 4 residues coordinate [4Fe-4S] cluster: Cys51, Cys54, Cys58, and Cys86. Mo-bis(molybdopterin guanine dinucleotide)-binding positions include Lys88, Gln155, Asn180, Cys184, 217 to 224 (WGSNMAEM), 248 to 252 (STFEH), 267 to 269 (QTD), Met378, Gln382, Asn488, 514 to 515 (SD), Lys537, Asp564, and 724 to 733 (TGRVLEHWHS). Trp800 provides a ligand contact to substrate. The Mo-bis(molybdopterin guanine dinucleotide) site is built by Asn808 and Lys825.

It belongs to the prokaryotic molybdopterin-containing oxidoreductase family. NasA/NapA/NarB subfamily. In terms of assembly, component of the periplasmic nitrate reductase NapAB complex composed of NapA and NapB. The cofactor is [4Fe-4S] cluster. Mo-bis(molybdopterin guanine dinucleotide) serves as cofactor. Predicted to be exported by the Tat system. The position of the signal peptide cleavage has not been experimentally proven.

The protein localises to the periplasm. The enzyme catalyses 2 Fe(II)-[cytochrome] + nitrate + 2 H(+) = 2 Fe(III)-[cytochrome] + nitrite + H2O. Catalytic subunit of the periplasmic nitrate reductase complex NapAB. Receives electrons from NapB and catalyzes the reduction of nitrate to nitrite. The polypeptide is Periplasmic nitrate reductase (Bradyrhizobium diazoefficiens (strain JCM 10833 / BCRC 13528 / IAM 13628 / NBRC 14792 / USDA 110)).